We begin with the raw amino-acid sequence, 591 residues long: Aspartate--tRNA(Asp/Asn) ligase (591 aa).

An L-aspartate-binding site is contributed by E175. The aspartate stretch occupies residues 199–202 (QQYK). Residues R221 and H450 each contribute to the L-aspartate site. 221-223 (RDE) provides a ligand contact to ATP. E484 is an ATP binding site. Position 491 (R491) interacts with L-aspartate. 536–539 (GVDR) lines the ATP pocket.

The protein belongs to the class-II aminoacyl-tRNA synthetase family. Type 1 subfamily. As to quaternary structure, homodimer.

The protein resides in the cytoplasm. The enzyme catalyses tRNA(Asx) + L-aspartate + ATP = L-aspartyl-tRNA(Asx) + AMP + diphosphate. Functionally, aspartyl-tRNA synthetase with relaxed tRNA specificity since it is able to aspartylate not only its cognate tRNA(Asp) but also tRNA(Asn). Reaction proceeds in two steps: L-aspartate is first activated by ATP to form Asp-AMP and then transferred to the acceptor end of tRNA(Asp/Asn). The polypeptide is Aspartate--tRNA(Asp/Asn) ligase (Rhodopseudomonas palustris (strain TIE-1)).